We begin with the raw amino-acid sequence, 249 residues long: MNVLSCSINTLIKEGLYEISGVEVGQHFYWQIGGFQVHAQVLITSWVVIAILLGSAVLAIRNPQTIPTDGQNFFEFVLEFIRDVSKTQIGEEYGPWVPFIGTLFLFIFVSNWSGALLPWKIIQLPQGELAAPTNDINTTVALALLTSVAYFYAGLSKKGLGYFSKYIQPTPILLPINILEDFTKPLSLSFRLFGNILADELVVVVLVSLVPLVVPIPVMFLGLFTSGIQALIFATLAAAYIGESMEGHH.

Transmembrane regions (helical) follow at residues 40-60, 97-117, 136-156, 201-221, and 222-242; these read QVLITSWVVIAILLGSAVLAI, VPFIGTLFLFIFVSNWSGALL, INTTVALALLTSVAYFYAGLS, LVVVVLVSLVPLVVPIPVMFL, and GLFTSGIQALIFATLAAAYIG.

This sequence belongs to the ATPase A chain family. F-type ATPases have 2 components, CF(1) - the catalytic core - and CF(0) - the membrane proton channel. CF(1) has five subunits: alpha(3), beta(3), gamma(1), delta(1), epsilon(1). CF(0) has four main subunits: a, b, b' and c.

The protein localises to the plastid. It is found in the chloroplast thylakoid membrane. Functionally, key component of the proton channel; it plays a direct role in the translocation of protons across the membrane. In Nasturtium officinale (Watercress), this protein is ATP synthase subunit a, chloroplastic.